Consider the following 459-residue polypeptide: MDFDTITSISTPMGEGAIGIVRLSGPQAIEIGDILYKGKKKLSEVETHTINYGHIIDPETNETVEEVMVSVLRAPKTFTREDIIEINCHGGILTINRILELTMTYGARMAEPGEYTKRAFLNGRIDLSQAEAVMDFIRSKTDRASKVAMNQIEGRLSDLIKKQRQSILEILAQVEVNIDYPEYDDVEDATTDFLLEQSKRIKEEINQLLETGAQGKIMREGLSTVIVGRPNVGKSSMLNNLIQDNKAIVTEVAGTTRDVLEEYVNVRGVPLRLVDTAGIRDTEDIVEKIGVERSRKALSEADLILFVLNNNEPLTEDDQTLFEVIKNEDVIVIINKTDLEQRLDVSELREMIGDMPLIQTSMLKQEGIDELEIQIKDLFFGGEVQNQDMTYVSNSRHISLLKQARQSIQDAIDAAESGIPMDMVQIDLTRTWEILGEIIGESASDELIDQLFSQFCLGK.

The (6S)-5-formyl-5,6,7,8-tetrahydrofolate site is built by Arg22, Glu85, and Arg124. Positions 221–380 (GLSTVIVGRP…LEIQIKDLFF (160 aa)) constitute a TrmE-type G domain. Residue Asn231 participates in K(+) binding. GTP contacts are provided by residues 231 to 236 (NVGKSS), 250 to 256 (TEVAGTT), and 275 to 278 (DTAG). Ser235 is a binding site for Mg(2+). K(+) is bound by residues Thr250, Val252, and Thr255. Thr256 lines the Mg(2+) pocket. Residue Lys459 coordinates (6S)-5-formyl-5,6,7,8-tetrahydrofolate.

The protein belongs to the TRAFAC class TrmE-Era-EngA-EngB-Septin-like GTPase superfamily. TrmE GTPase family. As to quaternary structure, homodimer. Heterotetramer of two MnmE and two MnmG subunits. The cofactor is K(+).

The protein localises to the cytoplasm. In terms of biological role, exhibits a very high intrinsic GTPase hydrolysis rate. Involved in the addition of a carboxymethylaminomethyl (cmnm) group at the wobble position (U34) of certain tRNAs, forming tRNA-cmnm(5)s(2)U34. This is tRNA modification GTPase MnmE from Staphylococcus epidermidis (strain ATCC 35984 / DSM 28319 / BCRC 17069 / CCUG 31568 / BM 3577 / RP62A).